Here is a 248-residue protein sequence, read N- to C-terminus: Phosphoribosyl isomerase A (248 aa).

Asp-14 acts as the Proton acceptor in catalysis. The active-site Proton donor is the Asp-133.

The protein belongs to the HisA/HisF family.

The protein resides in the cytoplasm. The enzyme catalyses 1-(5-phospho-beta-D-ribosyl)-5-[(5-phospho-beta-D-ribosylamino)methylideneamino]imidazole-4-carboxamide = 5-[(5-phospho-1-deoxy-D-ribulos-1-ylimino)methylamino]-1-(5-phospho-beta-D-ribosyl)imidazole-4-carboxamide. The catalysed reaction is N-(5-phospho-beta-D-ribosyl)anthranilate = 1-(2-carboxyphenylamino)-1-deoxy-D-ribulose 5-phosphate. Its pathway is amino-acid biosynthesis; L-histidine biosynthesis; L-histidine from 5-phospho-alpha-D-ribose 1-diphosphate: step 4/9. The protein operates within amino-acid biosynthesis; L-tryptophan biosynthesis; L-tryptophan from chorismate: step 3/5. Its function is as follows. Involved in both the histidine and tryptophan biosynthetic pathways. In Mycobacterium sp. (strain JLS), this protein is Phosphoribosyl isomerase A.